The chain runs to 232 residues: Large ribosomal subunit protein uL1 (232 aa).

This sequence belongs to the universal ribosomal protein uL1 family. As to quaternary structure, part of the 50S ribosomal subunit.

Binds directly to 23S rRNA. The L1 stalk is quite mobile in the ribosome, and is involved in E site tRNA release. Its function is as follows. Protein L1 is also a translational repressor protein, it controls the translation of the L11 operon by binding to its mRNA. The protein is Large ribosomal subunit protein uL1 of Dichelobacter nodosus (strain VCS1703A).